A 726-amino-acid polypeptide reads, in one-letter code: Sister chromatid cohesion protein SCC4 (726 aa).

TPR repeat units lie at residues A7–F40, F88–V121, C132–I165, R229–L262, P443–A477, A531–H564, and A572–L605. A disordered region spans residues S697–M726.

Belongs to the SCC4/mau-2 family. In terms of assembly, interacts with SCC2 to form the cohesin loading complex. In terms of tissue distribution, expressed ubiquitously.

It localises to the nucleus. It is found in the cytoplasm. In terms of biological role, essential protein required for cell fate determination during embryogenesis. Involved in sister chromatid cohesion. Forms a complex with SCC2, which is required for the association of the cohesin complex with chromosomes. The polypeptide is Sister chromatid cohesion protein SCC4 (Arabidopsis thaliana (Mouse-ear cress)).